A 361-amino-acid chain; its full sequence is Putative agmatine deiminase (361 aa).

Cys-354 (amidino-cysteine intermediate) is an active-site residue.

It belongs to the agmatine deiminase family.

The enzyme catalyses agmatine + H2O = N-carbamoylputrescine + NH4(+). The sequence is that of Putative agmatine deiminase from Streptococcus pneumoniae (strain ATCC BAA-255 / R6).